Consider the following 282-residue polypeptide: V-set domain-containing T-cell activation inhibitor 1 (282 aa).

A signal peptide spans 1–24 (MASLGQIIFWSIINVIIILAGAIV). Ig-like V-type domains are found at residues 35-144 (HFIT…ANLE) and 153-241 (PEIN…IKVT). 2 disulfide bridges follow: cysteine 56–cysteine 130 and cysteine 168–cysteine 225. Asparagine 216 is a glycosylation site (N-linked (GlcNAc...) asparagine). Glycine 257 carries GPI-anchor amidated glycine lipidation. Residues 258–282 (PSPCVSSVSAAGWALLSLSCCLMLR) constitute a propeptide, removed in mature form.

The protein belongs to the immunoglobulin superfamily. BTN/MOG family. Post-translationally, N-glycosylated.

It is found in the cell membrane. Functionally, negatively regulates T-cell-mediated immune response by inhibiting T-cell activation, proliferation, cytokine production and development of cytotoxicity. When expressed on the cell surface of tumor macrophages, plays an important role, together with regulatory T-cells (Treg), in the suppression of tumor-associated antigen-specific T-cell immunity. Involved in promoting epithelial cell transformation. The polypeptide is V-set domain-containing T-cell activation inhibitor 1 (Rattus norvegicus (Rat)).